We begin with the raw amino-acid sequence, 216 residues long: Thiamine-phosphate synthase (216 aa).

4-amino-2-methyl-5-(diphosphooxymethyl)pyrimidine-binding positions include 35-39 (QLRDK) and Asn-67. Residues Asp-68 and Asp-87 each coordinate Mg(2+). Ser-106 is a 4-amino-2-methyl-5-(diphosphooxymethyl)pyrimidine binding site. 132-134 (TSS) lines the 2-[(2R,5Z)-2-carboxy-4-methylthiazol-5(2H)-ylidene]ethyl phosphate pocket. Lys-135 is a 4-amino-2-methyl-5-(diphosphooxymethyl)pyrimidine binding site. Residues Gly-163 and 183 to 184 (IS) contribute to the 2-[(2R,5Z)-2-carboxy-4-methylthiazol-5(2H)-ylidene]ethyl phosphate site.

This sequence belongs to the thiamine-phosphate synthase family. Mg(2+) serves as cofactor.

The catalysed reaction is 2-[(2R,5Z)-2-carboxy-4-methylthiazol-5(2H)-ylidene]ethyl phosphate + 4-amino-2-methyl-5-(diphosphooxymethyl)pyrimidine + 2 H(+) = thiamine phosphate + CO2 + diphosphate. The enzyme catalyses 2-(2-carboxy-4-methylthiazol-5-yl)ethyl phosphate + 4-amino-2-methyl-5-(diphosphooxymethyl)pyrimidine + 2 H(+) = thiamine phosphate + CO2 + diphosphate. It catalyses the reaction 4-methyl-5-(2-phosphooxyethyl)-thiazole + 4-amino-2-methyl-5-(diphosphooxymethyl)pyrimidine + H(+) = thiamine phosphate + diphosphate. It participates in cofactor biosynthesis; thiamine diphosphate biosynthesis; thiamine phosphate from 4-amino-2-methyl-5-diphosphomethylpyrimidine and 4-methyl-5-(2-phosphoethyl)-thiazole: step 1/1. Its function is as follows. Condenses 4-methyl-5-(beta-hydroxyethyl)thiazole monophosphate (THZ-P) and 2-methyl-4-amino-5-hydroxymethyl pyrimidine pyrophosphate (HMP-PP) to form thiamine monophosphate (TMP). The chain is Thiamine-phosphate synthase from Methanoregula boonei (strain DSM 21154 / JCM 14090 / 6A8).